The following is a 98-amino-acid chain: NADH-ubiquinone oxidoreductase chain 4L (98 aa).

Helical transmembrane passes span 1–21 (MSLI…GLLM), 29–49 (ALLC…LTAL), and 59–79 (MPII…ALLV).

It belongs to the complex I subunit 4L family. As to quaternary structure, core subunit of respiratory chain NADH dehydrogenase (Complex I) which is composed of 45 different subunits.

It localises to the mitochondrion inner membrane. The enzyme catalyses a ubiquinone + NADH + 5 H(+)(in) = a ubiquinol + NAD(+) + 4 H(+)(out). Core subunit of the mitochondrial membrane respiratory chain NADH dehydrogenase (Complex I) which catalyzes electron transfer from NADH through the respiratory chain, using ubiquinone as an electron acceptor. Part of the enzyme membrane arm which is embedded in the lipid bilayer and involved in proton translocation. The sequence is that of NADH-ubiquinone oxidoreductase chain 4L (MT-ND4L) from Hyperoodon ampullatus (Northern bottlenose whale).